We begin with the raw amino-acid sequence, 234 residues long: NLP effector protein Pc576423 (234 aa).

The N-terminal stretch at 1 to 18 (MNLRAIAVTFATFAGANA) is a signal peptide. Residues asparagine 35 and asparagine 66 are each glycosylated (N-linked (GlcNAc...) asparagine). Positions 119–125 (GHRHDWE) match the Hepta-peptide GHRHDWE motif motif.

The protein belongs to the Necrosis inducing protein (NPP1) family.

It localises to the secreted. Secreted effector that contributes strongly to virulence during infection by P.capsici. The protein is NLP effector protein Pc576423 of Phytophthora capsici.